The following is a 1849-amino-acid chain: MYEGKKTKNMFLTRALEKILADKEVKKAHHSQLRKACEVALEEIKAETEKQSPPHGEAKAGSSTLPPVKSKTNFIEADKYFLPFELACQSKCPRIVSTSLDCLQKLIAYGHLTGNAPDSTTPGKKLIDRIIETICGCFQGPQTDEGVQLQIIKALLTAVTSQHIEIHEGTVLQAVRTCYNIYLASKNLINQTTAKATLTQMLNVIFARMENQALQEAKQMEKERHRQHHHLLQSPVSHHEPESPQLRYLPPQTVDHIPQEHEGDLDPQTNDVDKSLQDDTEPENGSDISSAENEQTEADQATAAETLSKNDILYDGENHDCEEKPQDIVQSIVEEMVNIVVGDTGERTTINVSADGNNGTIEDGSDSENIQANGIPGTPISVAYTPSLPDDRLSVSSNDTQESGNSSGPSPGAKFSHILQKDAFLVFRSLCKLSMKPLSDGPPDPKSHELRSKILSLQLLLSILQNAGPIFGTNEMFINAIKQYLCVALSKNGVSSVPEVFELSLSIFLTLLSNFKTHLKMQIEVFFKEIFLYILETSTSSFDHKWMVIQTLTRICADAQSVVDIYVNYDCDLNAANIFERLVNDLSKIAQGRGSQELGMSNVQELSLRKKGLECLVSILKCMVEWSKDQYVNPNSQTTLGQEKPSEQETSEMKHPETINRYGSLNSLESTSSSGIGSYSTQMSGTDNPEQFEVLKQQKEIIEQGIDLFTKKPKRGIQYLQEQGMLGTTPEDIAQFLHQEERLDSTQVGEFLGDNDKFNKEVMYAYVDQHDFSGKDFVSALRMFLEGFRLPGEAQKIDRLMEKFAARYLECNQGQTLFASADTAYVLAYSIIMLTTDLHSPQVKNKMTKEQYIKMNRGINDSKDLPEEYLSAIYNEIAGKKISMKETKELTIPAKSSKQNVASEKQRRLLYNLEMEQMAKTAKALMEAVSHVQAPFTSATHLEHVRPMFKLAWTPFLAAFSVGLQDCDDTEVASLCLEGIRCAIRIACIFSIQLERDAYVQALARFTLLTVSSGITEMKQKNIDTIKTLITVAHTDGNYLGNSWHEILKCISQLELAQLIGTGVKPRYISGTVRGREGSLTGAKDQAPDEFVGLGLVGGNVDWKQIASIQESIGETSSQSVVVAVDRIFTGSTRLDGNAIVDFVRWLCAVSMDELLSTTHPRMFSLQKIVEISYYNMGRIRLQWSRIWEVIGDHFNKVGCNPNEDVAIFAVDSLRQLSMKFLEKGELANFRFQKDFLRPFEHIMKRNRSPTIRDMVVRCIAQMVNSQAANIRSGWKNIFSVFHLAASDQDESIVELAFQTTGHIVTLVFEKHFPATIDSFQDAVKCLSEFACNAAFPDTSMEAIRLIRHCAKYVSDRPQAFKEYTSDDMNVAPEDRVWVRGWFPILFELSCIINRCKLDVRTRGLTVMFEIMKTYGYTYEKHWWQDLFRIVFRIFDNMKLPEQQTEKAEWMTTTCNHALYAICDVFTQYLEVLSDVLLDDIFAQLYWCVQQDNEQLARSGTNCLENVVILNGEKFTLEIWDKTCNCTLDIFKTTIPHALLTWRPISGETAPPTPSPVSENQLDTISQKSVDIHDSIQPRSADNRQQAPLASVSTVNEEISKIKPTAKFPEQKLFAALLIKCVVQLELIQTIDNIVFFPATSRKEDAENLAAAQRDAVDFDVRVDTQDQGMYRFLTSQQLFKLLDCLLESHRFAKAFNSNNEQRTALWKAGFKGKSKPNLLKQETSSLACGLRILFRMYTDESRASAWEEVQQRLLNVCSEALSYFLTLTSESHREAWTNLLLLFLTKVLKISDNRFKAHASFYYPLLCEIMQFDLIPELRAVLRRFFLRIGVVFQISQPPEQELGINKQ.

Residues 2-224 (YEGKKTKNMF…QEAKQMEKER (223 aa)) form a DCB; DCB:DCB and DCB:HUS domain interaction region. Positions 46–58 (AETEKQSPPHGEA) are enriched in basic and acidic residues. 3 disordered regions span residues 46 to 65 (AETE…SSTL), 216 to 301 (EAKQ…ADQA), and 350 to 413 (INVS…SPGA). Residues serine 52, serine 286, serine 289, and serine 290 each carry the phosphoserine modification. Polar residues-rich tracts occupy residues 350-360 (INVSADGNNGT) and 394-409 (SVSS…SSGP). Residues serine 397 and serine 410 each carry the phosphoserine modification. The interval 557-577 (ADAQSVVDIYVNYDCDLNAAN) is HUS; DCB:HUS domain interaction. Residues 634–687 (PNSQTTLGQEKPSEQETSEMKHPETINRYGSLNSLESTSSSGIGSYSTQMSGTD) are disordered. A compositionally biased stretch (basic and acidic residues) spans 644–658 (KPSEQETSEMKHPET). Positions 664–684 (SLNSLESTSSSGIGSYSTQMS) are enriched in low complexity. Residues 709-840 (FTKKPKRGIQ…IIMLTTDLHS (132 aa)) enclose the SEC7 domain. The Nuclear localization signal (NLS) motif lies at 711 to 715 (KKPKR). Residues serine 1079, serine 1566, and serine 1569 each carry the phosphoserine modification.

In terms of assembly, homodimer. Interacts with ARFGEF2/BIG2; both proteins are probably part of the same or very similar macromolecular complexes. Interacts with FKBP2. Interacts with MYO9B. Interacts with PRKAR1A and PRKAR2A. Interacts with PPP1CC. Interacts with NCL, FBL, NUP62 and U3 small nucleolar RNA. Interacts with DPY30. Interacts with PDE3A. Interacts with KANK1. Interacts with TBC1D22A and TBC1D22B. Phosphorylated. In vitro phosphorylated by PKA reducing its GEF activity and dephosphorylated by phosphatase PP1. In terms of tissue distribution, abundantly expressed in kidney, somewhat less abundant in lung, spleen, and brain, and still less abundant in heart.

Its subcellular location is the cytoplasm. The protein resides in the perinuclear region. It is found in the golgi apparatus. It localises to the trans-Golgi network. The protein localises to the nucleus. Its subcellular location is the nucleolus. The protein resides in the nucleus matrix. It is found in the membrane. With respect to regulation, inhibited by brefeldin A. In terms of biological role, promotes guanine-nucleotide exchange on ARF1 and ARF3. Promotes the activation of ARF1/ARF3 through replacement of GDP with GTP. Involved in vesicular trafficking. Required for the maintenance of Golgi structure; the function may be independent of its GEF activity. Required for the maturation of integrin beta-1 in the Golgi. Involved in the establishment and persistence of cell polarity during directed cell movement in wound healing. Proposed to act as A kinase-anchoring protein (AKAP) and may mediate crosstalk between Arf and PKA pathways. Inhibits GAP activity of MYO9B probably through competitive RhoA binding. The function in the nucleus remains to be determined. The sequence is that of Brefeldin A-inhibited guanine nucleotide-exchange protein 1 (ARFGEF1) from Bos taurus (Bovine).